Consider the following 426-residue polypeptide: Synaptotagmin-13 (426 aa).

Over 1–6 the chain is Vesicular; that stretch reads MVLSVP. A helical membrane pass occupies residues 7 to 29; it reads VIALGATLGTATSILALCGVTCL. The Cytoplasmic segment spans residues 30 to 426; the sequence is CRHMHPKKGL…QIAMWHQLHL (397 aa). C2 domains lie at 158–275 and 287–422; these read QAPK…AQWG and GAGE…AMWH.

It belongs to the synaptotagmin family. Interacts with NRXN1. As to expression, expressed in brain, pancreas and kidney.

It is found in the membrane. May be involved in transport vesicle docking to the plasma membrane. The protein is Synaptotagmin-13 (SYT13) of Homo sapiens (Human).